The primary structure comprises 453 residues: UDP-N-acetylmuramoylalanine--D-glutamate ligase (453 aa).

117–123 (GSNGKST) is an ATP binding site.

It belongs to the MurCDEF family.

It is found in the cytoplasm. The enzyme catalyses UDP-N-acetyl-alpha-D-muramoyl-L-alanine + D-glutamate + ATP = UDP-N-acetyl-alpha-D-muramoyl-L-alanyl-D-glutamate + ADP + phosphate + H(+). Its pathway is cell wall biogenesis; peptidoglycan biosynthesis. Its function is as follows. Cell wall formation. Catalyzes the addition of glutamate to the nucleotide precursor UDP-N-acetylmuramoyl-L-alanine (UMA). In Chromobacterium violaceum (strain ATCC 12472 / DSM 30191 / JCM 1249 / CCUG 213 / NBRC 12614 / NCIMB 9131 / NCTC 9757 / MK), this protein is UDP-N-acetylmuramoylalanine--D-glutamate ligase.